The chain runs to 372 residues: Pristinol synthase (372 aa).

Residues 1–12 (MAHETTSGRRLP) are compositionally biased toward basic and acidic residues. The disordered stretch occupies residues 1 to 23 (MAHETTSGRRLPDPTSPSDPTRR). Residues Asp-100 and Asp-104 each coordinate Mg(2+). The DDXXD motif signature appears at 100-104 (DDQFD). Residue Arg-197 participates in substrate binding. Residues Asn-243 and Ser-247 each contribute to the Mg(2+) site. Substrate is bound at residue Lys-250. Glu-251 provides a ligand contact to Mg(2+). 337 to 338 (RY) contacts substrate. Positions 349–372 (GRRRPWDGLTTATGTASPRHPRRA) are disordered.

It belongs to the terpene synthase family. The cofactor is Mg(2+).

It catalyses the reaction (2E,6E)-farnesyl diphosphate + H2O = (+)-(2S,3R,9R)-pristinol + diphosphate. Its pathway is secondary metabolite biosynthesis; terpenoid biosynthesis. Functionally, catalyzes the conversion of (2E,6E)-farnesyl diphosphate (FPP) to yield a new 5-8 bicyclic (pristinane) sesquiterpenol (+)-(2S,3R,9R)-pristinol via a 1,11-cyclization, which requires the abstraction of the pyrophosphate from FPP to yield the humulyl cation. The only accepted substrate is farnesyl diphosphate (FPP). In Streptomyces pristinaespiralis (strain ATCC 25486 / DSM 40338 / CBS 914.69 / JCM 4507 / KCC S-0507 / NBRC 13074 / NRRL 2958 / 5647), this protein is Pristinol synthase.